Consider the following 288-residue polypeptide: Thymidylate synthase (288 aa).

Arginine 21 is a dUMP binding site. Histidine 51 contacts (6R)-5,10-methylene-5,6,7,8-tetrahydrofolate. 150-151 (RR) is a dUMP binding site. Cysteine 170 serves as the catalytic Nucleophile. Residues 190–193 (RSGD), asparagine 201, and 231–233 (HIY) each bind dUMP. Aspartate 193 serves as a coordination point for (6R)-5,10-methylene-5,6,7,8-tetrahydrofolate. A (6R)-5,10-methylene-5,6,7,8-tetrahydrofolate-binding site is contributed by alanine 287.

Belongs to the thymidylate synthase family. Bacterial-type ThyA subfamily. Homodimer.

It is found in the cytoplasm. It catalyses the reaction dUMP + (6R)-5,10-methylene-5,6,7,8-tetrahydrofolate = 7,8-dihydrofolate + dTMP. It participates in pyrimidine metabolism; dTTP biosynthesis. Its function is as follows. Catalyzes the reductive methylation of 2'-deoxyuridine-5'-monophosphate (dUMP) to 2'-deoxythymidine-5'-monophosphate (dTMP) while utilizing 5,10-methylenetetrahydrofolate (mTHF) as the methyl donor and reductant in the reaction, yielding dihydrofolate (DHF) as a by-product. This enzymatic reaction provides an intracellular de novo source of dTMP, an essential precursor for DNA biosynthesis. In Mycoplasma mobile (strain ATCC 43663 / 163K / NCTC 11711) (Mesomycoplasma mobile), this protein is Thymidylate synthase.